Here is a 142-residue protein sequence, read N- to C-terminus: Galactose-6-phosphate isomerase subunit LacA (142 aa).

It belongs to the LacAB/RpiB family. Heteromultimeric protein consisting of LacA and LacB.

The enzyme catalyses aldehydo-D-galactose 6-phosphate = keto-D-tagatose 6-phosphate. Its pathway is carbohydrate metabolism; D-galactose 6-phosphate degradation; D-tagatose 6-phosphate from D-galactose 6-phosphate: step 1/1. The chain is Galactose-6-phosphate isomerase subunit LacA from Clostridium acetobutylicum (strain ATCC 824 / DSM 792 / JCM 1419 / IAM 19013 / LMG 5710 / NBRC 13948 / NRRL B-527 / VKM B-1787 / 2291 / W).